The following is a 274-amino-acid chain: Eukaryotic translation initiation factor 3 subunit G-2 (274 aa).

Residues 194–272 (SAVRISNLSE…LILCVEWSKP (79 aa)) form the RRM domain.

This sequence belongs to the eIF-3 subunit G family. In terms of assembly, component of the eukaryotic translation initiation factor 3 (eIF-3) complex. The eIF-3 complex interacts with pix.

It localises to the cytoplasm. Functionally, RNA-binding component of the eukaryotic translation initiation factor 3 (eIF-3) complex, which is involved in protein synthesis of a specialized repertoire of mRNAs and, together with other initiation factors, stimulates binding of mRNA and methionyl-tRNAi to the 40S ribosome. The eIF-3 complex specifically targets and initiates translation of a subset of mRNAs involved in cell proliferation. This subunit can bind 18S rRNA. The chain is Eukaryotic translation initiation factor 3 subunit G-2 from Drosophila pseudoobscura pseudoobscura (Fruit fly).